A 156-amino-acid polypeptide reads, in one-letter code: Regulatory protein RecX (156 aa).

This sequence belongs to the RecX family.

It localises to the cytoplasm. Functionally, modulates RecA activity. This chain is Regulatory protein RecX, found in Pseudomonas putida (strain GB-1).